A 243-amino-acid polypeptide reads, in one-letter code: Proteasome subunit beta (243 aa).

The propeptide at 1–49 (MRTPTGDLSDGPAEELGRDQPVFGPEIGEFEHSERRAAQADGEGEMKTG) is removed in mature form; by autocatalysis. Positions 1-50 (MRTPTGDLSDGPAEELGRDQPVFGPEIGEFEHSERRAAQADGEGEMKTGT) are disordered. Positions 29–38 (EFEHSERRAA) are enriched in basic and acidic residues. Thr-50 (nucleophile) is an active-site residue.

This sequence belongs to the peptidase T1B family. As to quaternary structure, the 20S proteasome core is composed of 14 alpha and 14 beta subunits that assemble into four stacked heptameric rings, resulting in a barrel-shaped structure. The two inner rings, each composed of seven catalytic beta subunits, are sandwiched by two outer rings, each composed of seven alpha subunits. The catalytic chamber with the active sites is on the inside of the barrel. Has a gated structure, the ends of the cylinder being occluded by the N-termini of the alpha-subunits. Is capped at one or both ends by the proteasome regulatory ATPase, PAN.

The protein localises to the cytoplasm. It catalyses the reaction Cleavage of peptide bonds with very broad specificity.. The formation of the proteasomal ATPase PAN-20S proteasome complex, via the docking of the C-termini of PAN into the intersubunit pockets in the alpha-rings, triggers opening of the gate for substrate entry. Interconversion between the open-gate and close-gate conformations leads to a dynamic regulation of the 20S proteasome proteolysis activity. In terms of biological role, component of the proteasome core, a large protease complex with broad specificity involved in protein degradation. This Halorubrum lacusprofundi (strain ATCC 49239 / DSM 5036 / JCM 8891 / ACAM 34) protein is Proteasome subunit beta.